The chain runs to 221 residues: Max dimerization protein 1 (221 aa).

Positions 21 to 49 (RREREAEHGYASMLPYNNKDRDALKRRNK) match the Nuclear localization signal motif. Disordered stretches follow at residues 30–68 (YASM…EKNR) and 173–204 (TGDL…YSST). The bHLH domain maps to 56-108 (SSRSTHNEMEKNRRAHLRLCLEKLKGLVPLGPESSRHTTLSLLTKAKLHIKKL). The segment covering 175–184 (DLDWSSSSVS) has biased composition (low complexity). The segment covering 191-204 (SMQSLGSDEGYSST) has biased composition (polar residues).

Heterodimer with MAX; the interaction is required for DNA-binding. DNA binding requires dimerization with another bHLH protein; does not form homodimers, and does not bind to DNA in the absence of MAX in vitro. Interacts with RNF17. In terms of processing, ubiquitinated by BIRC2/c-IAP1, leading to its subsequent degradation by the proteasome.

It is found in the nucleus. Functionally, component of a transcriptional repressor complex together with MAX. In complex with MAX binds to the core DNA sequence 5'-CAC[GA]TG-3'. Antagonizes MYC transcriptional activity by competing with MYC for MAX binding. Binds to the TERT promoter and represses telomerase expression, possibly by interfering with MYC binding. The chain is Max dimerization protein 1 (MXD1) from Homo sapiens (Human).